Reading from the N-terminus, the 137-residue chain is ATP synthase epsilon chain, chloroplastic (137 aa).

Belongs to the ATPase epsilon chain family. In terms of assembly, F-type ATPases have 2 components, CF(1) - the catalytic core - and CF(0) - the membrane proton channel. CF(1) has five subunits: alpha(3), beta(3), gamma(1), delta(1), epsilon(1). CF(0) has three main subunits: a, b and c.

The protein resides in the plastid. The protein localises to the chloroplast thylakoid membrane. Produces ATP from ADP in the presence of a proton gradient across the membrane. This is ATP synthase epsilon chain, chloroplastic from Agrostis stolonifera (Creeping bentgrass).